We begin with the raw amino-acid sequence, 358 residues long: Cyclin-dependent kinase 11 (358 aa).

A Protein kinase domain is found at 52 to 336; sequence FKKLYTINEG…ASDALKHPYF (285 aa). Residues 58–66 and lysine 81 contribute to the ATP site; that span reads INEGAFGVV. The Proton acceptor role is filled by aspartate 176.

The protein belongs to the protein kinase superfamily. CMGC Ser/Thr protein kinase family. CDC2/CDKX subfamily.

It carries out the reaction L-seryl-[protein] + ATP = O-phospho-L-seryl-[protein] + ADP + H(+). The catalysed reaction is L-threonyl-[protein] + ATP = O-phospho-L-threonyl-[protein] + ADP + H(+). This is Cyclin-dependent kinase 11 (cdk11) from Dictyostelium discoideum (Social amoeba).